We begin with the raw amino-acid sequence, 397 residues long: Odorant receptor 22a (397 aa).

Residues M1–K49 are Cytoplasmic-facing. Residues L50–E70 traverse the membrane as a helical segment. The Extracellular segment spans residues Y71–S86. The chain crosses the membrane as a helical span at residues L87 to F107. Over K108–Y136 the chain is Cytoplasmic. A helical transmembrane segment spans residues V137–M157. The Extracellular segment spans residues N158–Q182. Residues F183 to C203 form a helical membrane-spanning segment. Topologically, residues T204–P263 are cytoplasmic. A helical membrane pass occupies residues V264–L280. At G281–N286 the chain is on the extracellular side. A helical membrane pass occupies residues L287–F304. At D305–Q356 the chain is on the cytoplasmic side. The chain crosses the membrane as a helical span at residues P357–V377. At K378–Q397 the chain is on the extracellular side.

Belongs to the insect chemoreceptor superfamily. Heteromeric odorant receptor channel (TC 1.A.69) family. Or2a subfamily. Interacts with Orco, via conserved C-terminal cytoplasmic loops. Complexes exist early in the endomembrane system in olfactory sensory neurons (OSNs), coupling these complexes to the conserved ciliary trafficking pathway. Interacts with snmp1. As to expression, expressed with Orco in 17-20 sensory neurons on the medial-proximal edge of the antenna. Expressed in the ab3A neuron which responds to ethyl butyrate.

The protein resides in the cell membrane. Its function is as follows. Odorant receptor which mediates acceptance or avoidance behavior, depending on its substrates. The odorant receptor repertoire encodes a large collection of odor stimuli that vary widely in identity, intensity, and duration. Involved in the behavioral responses ethyl butyrate and to esters in more general. Complexes with Orco to form odorant-sensing units, providing sensitive and prolonged odorant signaling and calcium permeability. They are necessary and sufficient to promote functional reconstitution of odor-evoked signaling in sensory neurons that normally respond only to carbon dioxide. In Drosophila melanogaster (Fruit fly), this protein is Odorant receptor 22a (Or22a).